The sequence spans 372 residues: Chaperone protein DnaJ (372 aa).

The 65-residue stretch at 5 to 69 (DYYEVLGLTK…QKKARYDQFG (65 aa)) folds into the J domain. The segment at 129-211 (GKETEIEIPK…CRGEGKVQKR (83 aa)) adopts a CR-type zinc-finger fold. Zn(2+) contacts are provided by Cys-142, Cys-145, Cys-159, Cys-162, Cys-185, Cys-188, Cys-199, and Cys-202. CXXCXGXG motif repeat units follow at residues 142–149 (CETCHGSG), 159–166 (CSTCNGAG), 185–192 (CTTCHGTG), and 199–206 (CSTCRGEG).

Belongs to the DnaJ family. Homodimer. Zn(2+) is required as a cofactor.

It is found in the cytoplasm. Participates actively in the response to hyperosmotic and heat shock by preventing the aggregation of stress-denatured proteins and by disaggregating proteins, also in an autonomous, DnaK-independent fashion. Unfolded proteins bind initially to DnaJ; upon interaction with the DnaJ-bound protein, DnaK hydrolyzes its bound ATP, resulting in the formation of a stable complex. GrpE releases ADP from DnaK; ATP binding to DnaK triggers the release of the substrate protein, thus completing the reaction cycle. Several rounds of ATP-dependent interactions between DnaJ, DnaK and GrpE are required for fully efficient folding. Also involved, together with DnaK and GrpE, in the DNA replication of plasmids through activation of initiation proteins. The sequence is that of Chaperone protein DnaJ from Lysinibacillus sphaericus (strain C3-41).